The chain runs to 747 residues: DNA-directed RNA polymerase subunit beta' (747 aa).

4 residues coordinate Zn(2+): Cys70, Cys72, Cys97, and Cys100. Positions 502, 504, and 506 each coordinate Mg(2+).

This sequence belongs to the RNA polymerase beta' chain family. RpoC1 subfamily. In terms of assembly, in plastids the minimal PEP RNA polymerase catalytic core is composed of four subunits: alpha, beta, beta', and beta''. When a (nuclear-encoded) sigma factor is associated with the core the holoenzyme is formed, which can initiate transcription. Mg(2+) is required as a cofactor. Requires Zn(2+) as cofactor.

It is found in the plastid. The protein localises to the chloroplast. The catalysed reaction is RNA(n) + a ribonucleoside 5'-triphosphate = RNA(n+1) + diphosphate. Functionally, DNA-dependent RNA polymerase catalyzes the transcription of DNA into RNA using the four ribonucleoside triphosphates as substrates. The polypeptide is DNA-directed RNA polymerase subunit beta' (Gnetum parvifolium (Small-leaved jointfir)).